Reading from the N-terminus, the 482-residue chain is Sensor histidine kinase CusS (482 aa).

Residues 1-15 (MVSKPFQRPFSLATR) lie on the Cytoplasmic side of the membrane. A helical membrane pass occupies residues 16–36 (LTFFISLATIAAFFAFAWIMI). The Periplasmic segment spans residues 37–186 (HSVKVHFAEQ…LHYINDLMNK (150 aa)). Residues 187 to 207 (LIMTASVISILIVFIVLLAVH) form a helical membrane-spanning segment. Positions 207–260 (HKGHAPIRSVSRQIQNITSKDLDVRLDPQTVPIELEQLVLSFNHMIERIEDVFT) constitute an HAMP domain. The Cytoplasmic portion of the chain corresponds to 208-482 (KGHAPIRSVS…RFVIVLPERG (275 aa)). One can recognise a Histidine kinase domain in the interval 268–482 (DIAHEIRTPI…RFVIVLPERG (215 aa)). H271 carries the post-translational modification Phosphohistidine; by autocatalysis.

In terms of processing, autophosphorylated.

The protein localises to the cell inner membrane. The enzyme catalyses ATP + protein L-histidine = ADP + protein N-phospho-L-histidine.. Functionally, member of the two-component regulatory system CusS/CusR involved in response to copper and silver. Acts as a copper/silver ion sensor. Activates CusR by phosphorylation. This is Sensor histidine kinase CusS (cusS) from Escherichia coli O157:H7.